Here is a 223-residue protein sequence, read N- to C-terminus: 7-cyano-7-deazaguanine synthase (223 aa).

Residue 11 to 21 (ISGGMDSALAA) coordinates ATP. Zn(2+) is bound by residues C189, C197, C200, and C203.

The protein belongs to the QueC family. It depends on Zn(2+) as a cofactor.

It carries out the reaction 7-carboxy-7-deazaguanine + NH4(+) + ATP = 7-cyano-7-deazaguanine + ADP + phosphate + H2O + H(+). It participates in purine metabolism; 7-cyano-7-deazaguanine biosynthesis. Functionally, catalyzes the ATP-dependent conversion of 7-carboxy-7-deazaguanine (CDG) to 7-cyano-7-deazaguanine (preQ(0)). The sequence is that of 7-cyano-7-deazaguanine synthase from Campylobacter fetus subsp. fetus (strain 82-40).